Reading from the N-terminus, the 71-residue chain is U3-scytotoxin-Sth1h (71 aa).

The signal sequence occupies residues 1–33 (MSQNSITSYKMGFAKHFFLFAVLLCATAMYSVA). Residues 34-39 (EPAQER) constitute a propeptide that is removed on maturation. Disulfide bonds link Cys46–Cys60, Cys53–Cys64, and Cys59–Cys69.

As to expression, expressed by the venom gland.

It is found in the secreted. Functionally, probable insect neurotoxin with ion channel impairing activity. Does not show activity on 45 human receptors from 9 families (5-hydroxytryptamine, adrenergic, dopamine, muscarinic, histamine, neurotransmitter, opioid, sigma, and gaba(A) receptors). In vivo, when mixed with U3-SYTX-Sth1a does not cause paralytic or lethal activity when injected into crickets. It is noteworthy that crickets are evolutionarily distant from prey species. The polypeptide is U3-scytotoxin-Sth1h (Scytodes thoracica (Spitting spider)).